We begin with the raw amino-acid sequence, 419 residues long: UDP-N-acetylglucosamine 1-carboxyvinyltransferase (419 aa).

22–23 (KN) contributes to the phosphoenolpyruvate binding site. Position 91 (Arg91) interacts with UDP-N-acetyl-alpha-D-glucosamine. Catalysis depends on Cys115, which acts as the Proton donor. Position 115 is a 2-(S-cysteinyl)pyruvic acid O-phosphothioketal (Cys115). Residues 120-124 (RPVDL), 160-163 (KVSV), Asp305, and Val327 contribute to the UDP-N-acetyl-alpha-D-glucosamine site.

It belongs to the EPSP synthase family. MurA subfamily.

It localises to the cytoplasm. It catalyses the reaction phosphoenolpyruvate + UDP-N-acetyl-alpha-D-glucosamine = UDP-N-acetyl-3-O-(1-carboxyvinyl)-alpha-D-glucosamine + phosphate. Its pathway is cell wall biogenesis; peptidoglycan biosynthesis. Cell wall formation. Adds enolpyruvyl to UDP-N-acetylglucosamine. In Salmonella arizonae (strain ATCC BAA-731 / CDC346-86 / RSK2980), this protein is UDP-N-acetylglucosamine 1-carboxyvinyltransferase.